The chain runs to 275 residues: Large ribosomal subunit protein uL2c (275 aa).

Residues 224–263 (VMNPVDHPHGGGEGRAPIGRKRPLTPWGRPALGKKSRKNH) are disordered.

This sequence belongs to the universal ribosomal protein uL2 family. In terms of assembly, part of the 50S ribosomal subunit.

Its subcellular location is the plastid. It is found in the chloroplast. This Chaetosphaeridium globosum (Charophycean green alga) protein is Large ribosomal subunit protein uL2c (rpl2).